The following is a 105-amino-acid chain: Small cysteine and glycine repeat-containing protein 10 (105 aa).

The interval 4–41 is 10 X 2 AA repeats of CG; it reads CGCGGCGGRCSGGCGGGCGGGCGGGCGGGCGGCGGGCG.

Belongs to the KRTAP type 28 family.

Functionally, in the hair cortex, hair keratin intermediate filaments are embedded in an interfilamentous matrix, consisting of hair keratin-associated proteins (KRTAP), which are essential for the formation of a rigid and resistant hair shaft through their extensive disulfide bond cross-linking with abundant cysteine residues of hair keratins. The matrix proteins include the high-sulfur and high-glycine-tyrosine keratins. The polypeptide is Small cysteine and glycine repeat-containing protein 10 (Homo sapiens (Human)).